The chain runs to 592 residues: Outer spore wall assembly protein SHE10 (592 aa).

The first 23 residues, 1-23, serve as a signal peptide directing secretion; that stretch reads MRFFKRFLLTLTVFIYTLRYLHC. Coiled-coil stretches lie at residues 354 to 385 and 448 to 583; these read ENNI…LYEE and LNQF…KQMG. Basic and acidic residues predominate over residues 507 to 580; it reads QSEQEERIKS…EVRKQEEARK (74 aa). A disordered region spans residues 507-592; it reads QSEQEERIKS…GSPPPPQQQQ (86 aa).

The protein belongs to the SHE10 family. In terms of assembly, component of the mitochondria-localized RNase mitochondrial RNA-processing (RNase MRP) composed of one single RNA encoded by the NME1 gene and at least 31 proteins. Absent in the nucleus-localized RNase MRP (NuMRP).

The protein resides in the mitochondrion. Functionally, involved in spore wall assembly. May be a component of the mitochondrial RNase MRP (MtMRP), a ribonucleoprotein endoribonuclease involved in the cleaving RNA transcripts to generate primers for DNA replication in mitochondria. The protein is Outer spore wall assembly protein SHE10 of Vanderwaltozyma polyspora (strain ATCC 22028 / DSM 70294 / BCRC 21397 / CBS 2163 / NBRC 10782 / NRRL Y-8283 / UCD 57-17) (Kluyveromyces polysporus).